We begin with the raw amino-acid sequence, 54 residues long: Photosystem II reaction center protein K (54 aa).

The propeptide occupies 1–17 (MFQISLDMISNKINLLG). The helical transmembrane segment at 29–49 (IVDVLPIIPILFFLLAFVWQA) threads the bilayer.

Belongs to the PsbK family. In terms of assembly, PSII is composed of 1 copy each of membrane proteins PsbA, PsbB, PsbC, PsbD, PsbE, PsbF, PsbH, PsbI, PsbJ, PsbK, PsbL, PsbM, PsbT, PsbY, PsbZ, Psb30/Ycf12, at least 3 peripheral proteins of the oxygen-evolving complex and a large number of cofactors. It forms dimeric complexes.

Its subcellular location is the plastid. It localises to the chloroplast thylakoid membrane. Its function is as follows. One of the components of the core complex of photosystem II (PSII). PSII is a light-driven water:plastoquinone oxidoreductase that uses light energy to abstract electrons from H(2)O, generating O(2) and a proton gradient subsequently used for ATP formation. It consists of a core antenna complex that captures photons, and an electron transfer chain that converts photonic excitation into a charge separation. The sequence is that of Photosystem II reaction center protein K from Euglena stellata.